The sequence spans 102 residues: PqqA binding protein (102 aa).

This sequence belongs to the PqqD family. Monomer. Interacts with PqqE.

It functions in the pathway cofactor biosynthesis; pyrroloquinoline quinone biosynthesis. Its function is as follows. Functions as a PqqA binding protein and presents PqqA to PqqE, in the pyrroloquinoline quinone (PQQ) biosynthetic pathway. In Rhodopseudomonas palustris (strain ATCC BAA-98 / CGA009), this protein is PqqA binding protein.